The sequence spans 338 residues: MPVLSNPSFYLPLVDITPFLENPHGAAAQDVIESVRTACKSTGFFQIKGHQVPLRLQKSVFEASARFFALPLKNKLELDSRKTVGFRGYDVMETQSYELEFGAVQEADALRDIKEGFFIATDLPPDHPHVANGRFLQGPNVWPKPEQLAPEDFQSVLEEYYTEMQRLSHVVLSLLAATLPYGPHVFDELETCDPMSLLRLLHYPRGLEKQDGKKLQLGAGEHTDFGTFTLLLQDEHPGLEVQDSVTGEWHGVPPQEDVYIVNVADILSTMTEGDYKSSVHRVWNIKSNDRYSVVFFYDGNLDYKVKPLRSSGQDENEEIDAPTIEEHVRSRLTASYAI.

A Fe2OG dioxygenase domain is found at 193-299 (DPMSLLRLLH…RYSVVFFYDG (107 aa)). Fe cation contacts are provided by histidine 222, aspartate 224, and histidine 280. Arginine 290 serves as a coordination point for 2-oxoglutarate.

The protein belongs to the iron/ascorbate-dependent oxidoreductase family. Fe(2+) is required as a cofactor.

The enzyme catalyses clavatol + 2-oxoglutarate + O2 = hydroxyclavatol + succinate + CO2. The protein operates within secondary metabolite biosynthesis. In terms of biological role, 2-oxoglutarate-dependent dioxygenase; part of the cla gene cluster that produces clavatol and ortho-quinone methide. The clavatol biosynthesis cluster cla and the terrestric acid cluster tra are both involved in the production of peniphenones and penilactones. The non-reducing PKS claF is responsible for the formation of clavatol from successive condensations of 3 malonyl-CoA units, presumably with a simple acetyl-CoA starter unit, and 2 methylation steps. The esterase claE probably collaborates with claF by catalyzing the hydrolysis of ACP-bound acyl intermediates to free the ACP from stalled intermediates. The clavatol oxidase claD then converts clavatol to hydroxyclavatol. Spontaneous dehydration of hydroxyclavatol leads to the accumulation of the highly active ortho-quinone methide. On the other hand, the PKS-NRPS hybrid traA is involved in the formation of crustosic acid, with the help of traB and traD. The polyketide synthase module (PKS) of traA is responsible for the synthesis of the polyketide backbone via the condensation of an acetyl-CoA starter unit with 3 malonyl-CoA units. The downstream nonribosomal peptide synthetase (NRPS) module then amidates the carboxyl end of the polyketide with L-malic acid. Because traA lacks a designated enoylreductase (ER) domain, the required activity is provided the enoyl reductase traG. Crustosic acid undergoes decarboxylation and isomerization to the terrestric acid, catalyzed by the 2-oxoglutarate-dependent dioxygenase traH. Both acids are further converted to the 2 gamma-butyrolactones (R)-5-methyltetronic acid and (S)-5-carboxylmethyltetronic acid, with involvement of the cytochrome P450 monooxygenase claJ. Spontaneous addition of the methide to these gamma-butyrolactones leads to peniphenone D and penilactone D, which undergo again stereospecific attacking by methide to give penilactones A and B. The polypeptide is Clavatol oxidase claD (Penicillium crustosum (Blue mold fungus)).